Reading from the N-terminus, the 60-residue chain is Venom protein 4.1 (60 aa).

The signal sequence occupies residues Met1 to Ala26.

The protein belongs to the non-disulfide-bridged peptide (NDBP) superfamily. As to expression, expressed by the venom gland.

It is found in the secreted. In Lychas mucronatus (Chinese swimming scorpion), this protein is Venom protein 4.1.